A 63-amino-acid chain; its full sequence is Sperm protamine P1 (63 aa).

The segment at 1-63 (MARYRRHSRS…RYSRRGRRRY (63 aa)) is disordered.

Belongs to the protamine P1 family. As to expression, testis.

Its subcellular location is the nucleus. The protein localises to the chromosome. Functionally, protamines substitute for histones in the chromatin of sperm during the haploid phase of spermatogenesis. They compact sperm DNA into a highly condensed, stable and inactive complex. This chain is Sperm protamine P1 (PRM1), found in Pseudantechinus macdonnellensis (Fat-tailed marsupial mouse).